Consider the following 129-residue polypeptide: Small ribosomal subunit protein uS11 (129 aa).

The protein belongs to the universal ribosomal protein uS11 family. As to quaternary structure, part of the 30S ribosomal subunit. Interacts with proteins S7 and S18. Binds to IF-3.

Located on the platform of the 30S subunit, it bridges several disparate RNA helices of the 16S rRNA. Forms part of the Shine-Dalgarno cleft in the 70S ribosome. The protein is Small ribosomal subunit protein uS11 of Desulfitobacterium hafniense (strain DSM 10664 / DCB-2).